Consider the following 196-residue polypeptide: Charged multivesicular body protein 1a (196 aa).

Methionine 1 carries the post-translational modification N-acetylmethionine. Residues 5-47 (LFQLKFTAKQLEKLAKKAEKDSKAEQAKVKKALLQKNVECARV) adopt a coiled-coil conformation. A Phosphoserine modification is found at serine 101. Positions 102 to 124 (TMDLQKVSSVMDRFEQQVQNLDV) form a coiled coil. A Phosphoserine modification is found at serine 173. A disordered region spans residues 173 to 196 (SAVGESSVRSQEDQLSRRLAALRN). Residues 185–195 (DQLSRRLAALR) carry the MIT-interacting motif motif.

This sequence belongs to the SNF7 family. Probable peripherally associated component of the endosomal sorting required for transport complex III (ESCRT-III). ESCRT-III components are thought to multimerize to form a flat lattice on the perimeter membrane of the endosome. Several assembly forms of ESCRT-III may exist that interact and act sequentially. Self-associates. Interacts with CHMP1B. Interacts with VPS4A. Interacts with VPS4B. Interacts with PHF1. Interacts with IST1. Interacts with MITD1. In terms of tissue distribution, expressed in placenta, cultured skin fibroblasts and in osteoblast cell line MG-63.

It is found in the cytoplasm. It localises to the endosome membrane. Its subcellular location is the nucleus matrix. In terms of biological role, probable peripherally associated component of the endosomal sorting required for transport complex III (ESCRT-III) which is involved in multivesicular bodies (MVBs) formation and sorting of endosomal cargo proteins into MVBs. MVBs contain intraluminal vesicles (ILVs) that are generated by invagination and scission from the limiting membrane of the endosome and mostly are delivered to lysosomes enabling degradation of membrane proteins, such as stimulated growth factor receptors, lysosomal enzymes and lipids. The MVB pathway appears to require the sequential function of ESCRT-O, -I,-II and -III complexes. ESCRT-III proteins mostly dissociate from the invaginating membrane before the ILV is released. The ESCRT machinery also functions in topologically equivalent membrane fission events, such as the terminal stages of cytokinesis and the budding of enveloped viruses (HIV-1 and other lentiviruses). ESCRT-III proteins are believed to mediate the necessary vesicle extrusion and/or membrane fission activities, possibly in conjunction with the AAA ATPase VPS4. Involved in cytokinesis. Involved in recruiting VPS4A and/or VPS4B to the midbody of dividing cells. May also be involved in chromosome condensation. Targets the Polycomb group (PcG) protein BMI1/PCGF4 to regions of condensed chromatin. May play a role in stable cell cycle progression and in PcG gene silencing. In Homo sapiens (Human), this protein is Charged multivesicular body protein 1a (CHMP1A).